Consider the following 148-residue polypeptide: Small ribosomal subunit protein bS6 (148 aa).

The disordered stretch occupies residues 96–148; sequence HEEGQSAMLTRRDDRRERDGDDRPRRREGGFDRGDRGDRGPRRPRDNEAGEGA.

It belongs to the bacterial ribosomal protein bS6 family.

Its function is as follows. Binds together with bS18 to 16S ribosomal RNA. This Brucella abortus biovar 1 (strain 9-941) protein is Small ribosomal subunit protein bS6.